Reading from the N-terminus, the 221-residue chain is Translation initiation factor 6 (221 aa).

This sequence belongs to the eIF-6 family.

Binds to the 50S ribosomal subunit and prevents its association with the 30S ribosomal subunit to form the 70S initiation complex. This is Translation initiation factor 6 from Methanocella arvoryzae (strain DSM 22066 / NBRC 105507 / MRE50).